The following is a 71-amino-acid chain: uncharacterized protein (71 aa).

This is an uncharacterized protein from Thermoproteus tenax virus 1 (strain KRA1) (TTV1).